We begin with the raw amino-acid sequence, 265 residues long: tRNA pseudouridine synthase A (265 aa).

Asp-53 (nucleophile) is an active-site residue. Tyr-111 is a binding site for substrate.

This sequence belongs to the tRNA pseudouridine synthase TruA family. As to quaternary structure, homodimer.

It catalyses the reaction uridine(38/39/40) in tRNA = pseudouridine(38/39/40) in tRNA. Functionally, formation of pseudouridine at positions 38, 39 and 40 in the anticodon stem and loop of transfer RNAs. This is tRNA pseudouridine synthase A from Acinetobacter baumannii (strain ATCC 17978 / DSM 105126 / CIP 53.77 / LMG 1025 / NCDC KC755 / 5377).